Here is a 908-residue protein sequence, read N- to C-terminus: Mycobactin import ATP-binding/permease protein IrtA (908 aa).

The Cytoplasmic segment spans residues 1–329 (MARGFQGVML…SRLLAPLKKP (329 aa)). The FAD-binding FR-type domain occupies 15-124 (ARDHQATVVD…MGSRGFSVPE (110 aa)). The segment at 16-245 (RDHQATVVDK…AQAYWTEGRA (230 aa)) is siderophore interaction domain. FAD-binding positions include 70-73 (RAYT), 87-91 (DMVLH), 97-98 (AS), and 241-243 (TEG). Positions 245–311 (AMGSSRGETS…GAAQPRTPVR (67 aa)) are disordered. Low complexity predominate over residues 253–309 (TSTPAKPAAKTAPAKAAAKPAAASGAGTPEHAAAPAAATTGAPQAAPAPGAAQPRTP). Residues 330–350 (LIVSGVLQALITLIELAPFVL) form a helical membrane-spanning segment. An ABC transmembrane type-1 domain is found at 331–613 (IVSGVLQALI…IGYGLSGIQT (283 aa)). Residues 351 to 371 (LVELARLLLGGAEAERLWTLG) are Periplasmic-facing. A helical membrane pass occupies residues 372 to 392 (LTAVSLIGLGAVLAAAMTLWL). The Cytoplasmic portion of the chain corresponds to 393-444 (HRVDARFAHELRGRLLTKLSRLPLGWFTRRGSASTKQLVQDDTLALHYLITH). The helical transmembrane segment at 445 to 465 (AIPDAVAAVVAPVAVLVYLFV) threads the bilayer. Over 466 to 469 (ADWR) the chain is Periplasmic. A helical membrane pass occupies residues 470–490 (VALVLFIPVLVYLVLMSVMTI). Residues 491-557 (QSGSKIAQAP…PFVGKKTLMD (67 aa)) lie on the Cytoplasmic side of the membrane. Residues 558–578 (LVTRPATFLWIILVAGVPLVV) form a helical membrane-spanning segment. Residues 579–586 (TGRMDPVN) are Periplasmic-facing. The chain crosses the membrane as a helical span at residues 587–607 (LLPFLLLGTTFGARLLGIGYG). At 608–908 (LSGIQTGMLA…VSADAVEVGR (301 aa)) the chain is on the cytoplasmic side. The ABC transporter domain maps to 654 to 887 (VELDRVSFEY…GGRYRGLWDS (234 aa)). An ATP-binding site is contributed by 687-694 (GPSGSGKS).

The protein belongs to the ABC transporter superfamily. Siderophore-Fe(3+) uptake transporter (SIUT) (TC 3.A.1.21) family. In terms of assembly, forms a heterodimer with IrtB. The cofactor is FAD.

It localises to the cell inner membrane. The ATPase activity of IrtAB is stimulated more than 38-fold in the presence of Fe-MBT, and more than 10-fold in the presence of Fe-cMBT. In terms of biological role, part of the ABC transporter complex IrtAB involved in the import of iron-bound mycobactin (Fe-MBT) and carboxymycobactin (Fe-cMBT). Has a preference for Fe-MBT over Fe-cMBT. Mycobactins are then reduced by the siderophore interaction domain to facilitate iron release in the bacterial cell. Transmembrane domains (TMD) form a pore in the membrane and the ATP-binding domain (NBD) is responsible for energy generation. In Mycolicibacterium thermoresistibile (strain ATCC 19527 / DSM 44167 / CIP 105390 / JCM 6362 / NCTC 10409 / 316) (Mycobacterium thermoresistibile), this protein is Mycobactin import ATP-binding/permease protein IrtA.